The following is a 192-amino-acid chain: Large ribosomal subunit protein bL25 (192 aa).

This sequence belongs to the bacterial ribosomal protein bL25 family. CTC subfamily. Part of the 50S ribosomal subunit; part of the 5S rRNA/L5/L18/L25 subcomplex. Contacts the 5S rRNA. Binds to the 5S rRNA independently of L5 and L18.

Its function is as follows. This is one of the proteins that binds to the 5S RNA in the ribosome where it forms part of the central protuberance. This Cytophaga hutchinsonii (strain ATCC 33406 / DSM 1761 / CIP 103989 / NBRC 15051 / NCIMB 9469 / D465) protein is Large ribosomal subunit protein bL25.